The primary structure comprises 580 residues: Putative monoterpene synthase 8 (580 aa).

Residues 1–44 constitute a chloroplast transit peptide; that stretch reads MACTSNLSSLSKSWAVLDVPRGAPKATGLWLKRQFIFKTSRICM. Positions 333, 337, 478, 482, and 486 each coordinate Mg(2+). The DDXXD motif signature appears at 333–337; sequence DDIFD.

Belongs to the terpene synthase family. Tpsg subfamily. In terms of assembly, monomer. The cofactor is Mg(2+). Requires Mn(2+) as cofactor. In terms of tissue distribution, confined to flowers.

The protein resides in the plastid. It is found in the chloroplast. It functions in the pathway secondary metabolite biosynthesis; terpenoid biosynthesis. Monoterpene synthase (mono-TPS) involved in the biosynthesis of monoterpenes natural products, constituent of coffee beverage aroma. This is Putative monoterpene synthase 8 from Coffea arabica (Arabian coffee).